The sequence spans 136 residues: Histone H3 (136 aa).

Residues 1–42 (MARTKQTARKSTGGKAPRKQIAAKAARKAAPSTGGVKKPHRY) form a disordered region. K5 is subject to N6,N6,N6-trimethyllysine; alternate. The residue at position 5 (K5) is an N6,N6-dimethyllysine; alternate. N6-methyllysine; alternate occurs at positions 5 and 10. At K10 the chain carries N6-acetyllysine; alternate. A Phosphoserine modification is found at S11. K15 carries the post-translational modification N6,N6-dimethyllysine; alternate. Residues K15, K19, K24, K28, and K37 each carry the N6-acetyllysine; alternate modification. Residues K19, K24, K28, and K37 each carry the N6-methyllysine; alternate modification. Over residues 19–31 (KQIAAKAARKAAP) the composition is skewed to low complexity. 2 positions are modified to N6,N6,N6-trimethyllysine; alternate: K28 and K37. N6,N6-dimethyllysine; alternate is present on residues K28 and K37. N6-acetyllysine is present on residues K57 and K65. At K80 the chain carries N6,N6,N6-trimethyllysine; alternate. The residue at position 80 (K80) is an N6,N6-dimethyllysine; alternate. Residue K80 is modified to N6-methyllysine; alternate.

Belongs to the histone H3 family. As to quaternary structure, the nucleosome is a histone octamer containing two molecules each of H2A, H2B, H3 and H4 assembled in one H3-H4 heterotetramer and two H2A-H2B heterodimers. The octamer wraps approximately 147 bp of DNA. Phosphorylated to form H3S10ph. H3S10ph promotes subsequent H3K14ac formation and is required for transcriptional activation through TBP recruitment to the promoters. In terms of processing, mono-, di- and trimethylated by the COMPASS complex to form H3K4me1/2/3. H3K4me activates gene expression by regulating transcription elongation and plays a role in telomere length maintenance. H3K4me enrichment correlates with transcription levels, and occurs in a 5' to 3' gradient with H3K4me3 enrichment at the 5'-end of genes, shifting to H3K4me2 and then H3K4me1. Methylated by SET2 to form H3K36me. H3K36me represses gene expression. Methylated by DOT1 to form H3K79me. H3K79me is required for association of SIR proteins with telomeric regions and for telomeric silencing. The COMPASS-mediated formation of H3K4me2/3 and the DOT1-mediated formation of H3K79me require H2BK123ub1. Post-translationally, acetylation of histone H3 leads to transcriptional activation. H3K14ac formation by GCN5 is promoted by H3S10ph. H3K14ac can also be formed by ESA1. H3K56ac formation occurs predominantly in newly synthesized H3 molecules during G1, S and G2/M of the cell cycle and may be involved in DNA repair.

Its subcellular location is the nucleus. The protein localises to the chromosome. Core component of nucleosome. Nucleosomes wrap and compact DNA into chromatin, limiting DNA accessibility to the cellular machineries which require DNA as a template. Histones thereby play a central role in transcription regulation, DNA repair, DNA replication and chromosomal stability. DNA accessibility is regulated via a complex set of post-translational modifications of histones, also called histone code, and nucleosome remodeling. This Coccidioides immitis (strain RS) (Valley fever fungus) protein is Histone H3 (HHT1).